The chain runs to 139 residues: Peptide methionine sulfoxide reductase MsrB (139 aa).

The 123-residue stretch at threonine 9–aspartate 131 folds into the MsrB domain. Positions 48, 51, 97, and 100 each coordinate Zn(2+). The Nucleophile role is filled by cysteine 120.

The protein belongs to the MsrB Met sulfoxide reductase family. The cofactor is Zn(2+).

It carries out the reaction L-methionyl-[protein] + [thioredoxin]-disulfide + H2O = L-methionyl-(R)-S-oxide-[protein] + [thioredoxin]-dithiol. The protein is Peptide methionine sulfoxide reductase MsrB of Pectobacterium carotovorum subsp. carotovorum (strain PC1).